The following is a 681-amino-acid chain: Sterile alpha motif domain-containing protein 11 (681 aa).

Disordered stretches follow at residues R41–P77, Y212–S234, G251–V307, and L407–G498. K72 participates in a covalent cross-link: Glycyl lysine isopeptide (Lys-Gly) (interchain with G-Cter in SUMO2). A compositionally biased stretch (basic and acidic residues) spans H219 to S234. A compositionally biased stretch (pro residues) spans P412–P423. A Phosphothreonine modification is found at T485. An SAM domain is found at W543 to V608. The segment at L625–C681 is disordered. Composition is skewed to polar residues over residues Q637–S646 and G656–G665. The residue at position 640 (S640) is a Phosphoserine.

In terms of assembly, self-associates. Component of a Polycomb group (PcG) multiprotein PRC1-like complex. Interacts with SAMD7 and PHC2. As to expression, expressed in the outer and inner nuclear layers, ganglion cell layer and rod photoreceptors of the retina (at protein level). Widely expressed, showing the highest expression in kidney, prostate and retina.

The protein localises to the nucleus. In terms of biological role, component of a Polycomb group (PcG) multiprotein PRC1-like complex, essential for establishing rod photoreceptor cell identity and function by silencing nonrod gene expression in developing rod photoreceptor cells. The polypeptide is Sterile alpha motif domain-containing protein 11 (SAMD11) (Homo sapiens (Human)).